Reading from the N-terminus, the 388-residue chain is Flap endonuclease 1 (388 aa).

Positions 1–105 are N-domain; that stretch reads MGIKNLTSLI…GELAKRYARR (105 aa). Residue aspartate 34 coordinates Mg(2+). Arginine 71 contacts DNA. 5 residues coordinate Mg(2+): aspartate 87, glutamate 159, glutamate 161, aspartate 180, and aspartate 182. The tract at residues 123–254 is I-domain; the sequence is DVQKFQKRTI…KKSFDMITKH (132 aa). Glutamate 159 contacts DNA. Positions 232 and 234 each coordinate DNA. Aspartate 234 lines the Mg(2+) pocket. The interaction with PCNA stretch occupies residues 338 to 346; that stretch reads VQTRIDTFF. Residues 349–388 are disordered; it reads IKRPRDEDAGSAKKKQKTVAKPGAAGSKKKPAAKKAAGKK. The span at 375-388 shows a compositional bias: basic residues; the sequence is SKKKPAAKKAAGKK.

The protein belongs to the XPG/RAD2 endonuclease family. FEN1 subfamily. Interacts with PCNA. Three molecules of repG bind to one PCNA trimer with each molecule binding to one PCNA monomer. PCNA stimulates the nuclease activity without altering cleavage specificity. Mg(2+) serves as cofactor. Phosphorylated. Phosphorylation upon DNA damage induces relocalization to the nuclear plasma.

The protein resides in the nucleus. It localises to the nucleolus. It is found in the nucleoplasm. The protein localises to the mitochondrion. In terms of biological role, structure-specific nuclease with 5'-flap endonuclease and 5'-3' exonuclease activities involved in DNA replication and repair. During DNA replication, cleaves the 5'-overhanging flap structure that is generated by displacement synthesis when DNA polymerase encounters the 5'-end of a downstream Okazaki fragment. It enters the flap from the 5'-end and then tracks to cleave the flap base, leaving a nick for ligation. Also involved in the long patch base excision repair (LP-BER) pathway, by cleaving within the apurinic/apyrimidinic (AP) site-terminated flap. Acts as a genome stabilization factor that prevents flaps from equilibrating into structures that lead to duplications and deletions. Also possesses 5'-3' exonuclease activity on nicked or gapped double-stranded DNA, and exhibits RNase H activity. Also involved in replication and repair of rDNA and in repairing mitochondrial DNA. The sequence is that of Flap endonuclease 1 from Heterostelium pallidum (strain ATCC 26659 / Pp 5 / PN500) (Cellular slime mold).